Reading from the N-terminus, the 593-residue chain is ABC1 family protein lscO (593 aa).

Disordered stretches follow at residues Met1–Lys29 and Pro441–Lys467. Composition is skewed to basic and acidic residues over residues Met8 to Thr22 and Gln457 to Lys467.

Belongs to the protein kinase superfamily. ADCK protein kinase family.

In terms of biological role, ABC1 family protein; part of the gene cluster that mediates the biosynthesis of the lipopeptide antibiotics leucinostatins that show extensive biological activities, including antimalarial, antiviral, antibacterial, antifungal, and antitumor activities, as well as phytotoxic. The function of lcsO within the leucinostatins biosynthesis has not been identified yet. In Purpureocillium lilacinum (Paecilomyces lilacinus), this protein is ABC1 family protein lscO.